We begin with the raw amino-acid sequence, 182 residues long: Ferritin heavy chain (182 aa).

Met-1 carries the N-acetylmethionine modification. At Thr-2 the chain carries N-acetylthreonine; in Ferritin heavy chain, N-terminally processed. The Ferritin-like diiron domain occupies 11 to 160; sequence QNYHQDSEAA…DHVTNLRRMG (150 aa). Positions 28, 63, 66, 108, and 142 each coordinate Fe cation.

The protein belongs to the ferritin family. Oligomer of 24 subunits. There are two types of subunits: L (light) chain and H (heavy) chain. The major chain can be light or heavy, depending on the species and tissue type. The functional molecule forms a roughly spherical shell with a diameter of 12 nm and contains a central cavity into which the insoluble mineral iron core is deposited. Interacts with NCOA4; NCOA4 promotes targeting of the iron-binding ferritin complex to autolysosomes following starvation or iron depletion.

It localises to the cytoplasm. Its subcellular location is the lysosome. It is found in the cytoplasmic vesicle. The protein resides in the autophagosome. The enzyme catalyses 4 Fe(2+) + O2 + 4 H(+) = 4 Fe(3+) + 2 H2O. In terms of biological role, stores iron in a soluble, non-toxic, readily available form. Important for iron homeostasis. Has ferroxidase activity. Iron is taken up in the ferrous form and deposited as ferric hydroxides after oxidation. Also plays a role in delivery of iron to cells. Mediates iron uptake in capsule cells of the developing kidney. Delivery to lysosomes is mediated by the cargo receptor NCOA4 for autophagic degradation and release of iron. This Equus caballus (Horse) protein is Ferritin heavy chain (FTH1).